The following is a 411-amino-acid chain: MQCSWKAVLLLALASIAIQYTAIRTFTAKSFHTCPGLAEAGLAERLCEESPTFAYNLSRKTHILILATTRSGSSFVGQLFNQHLDVFYLFEPLYHVQNTLIPRFTQGKSPADRRVMLGASRDLLRSLYDCDLYFLENYIKPPPVNHTTDRIFRRGASRVLCSRPVCDPPGPADLVLEEGDCVRKCGLLNLTVAAEACRERSHVAIKTVRVPEVNDLRALVEDPRLNLKVIQLVRDPRGILASRSETFRDTYRLWRLWYGTGRKPYNLDVTQLTTVCEDFSNSVSTGLMRPPWLKGKYMLVRYEDLARNPMKKTEEIYGFLGIPLDSHVARWIQNNTRGDPTLGKHKYGTVRNSAATAEKWRFRLSYDIVAFAQNACQQVLAQLGYKIAASEEELKNPSVSLVEERDFRPFS.

Residues 1-2 (MQ) are Cytoplasmic-facing. A helical; Signal-anchor for type II membrane protein transmembrane segment spans residues 3–23 (CSWKAVLLLALASIAIQYTAI). The Lumenal segment spans residues 24-411 (RTFTAKSFHT…VEERDFRPFS (388 aa)). An N-linked (GlcNAc...) asparagine glycan is attached at Asn-56. Position 69–75 (69–75 (TRSGSSF)) interacts with 3'-phosphoadenylyl sulfate. Asn-145 and Asn-189 each carry an N-linked (GlcNAc...) asparagine glycan. 234 to 242 (RDPRGILAS) is a 3'-phosphoadenylyl sulfate binding site. Asn-334 is a glycosylation site (N-linked (GlcNAc...) asparagine). Positions 337 to 339 (RGD) match the Cell attachment site motif.

Belongs to the sulfotransferase 1 family. Gal/GlcNAc/GalNAc subfamily. As to expression, widely expressed at low level. Expressed in brain and skeletal muscle. Expressed by high endothelial cells (HEVs) and leukocytes.

Its subcellular location is the golgi apparatus membrane. The catalysed reaction is 3'-phosphoadenylyl sulfate + keratan = adenosine 3',5'-bisphosphate + keratan 6'-sulfate.. It participates in glycan metabolism. Its function is as follows. Sulfotransferase that utilizes 3'-phospho-5'-adenylyl sulfate (PAPS) as sulfonate donor to catalyze the transfer of sulfate to position 6 of internal galactose (Gal) residues of keratan. Cooperates with B4GALT4 and B3GNT7 glycosyltransferases and CHST6 sulfotransferase to construct and elongate disulfated disaccharide unit [-&gt;3(6-sulfoGalbeta)1-&gt;4(6-sulfoGlcNAcbeta)1-&gt;] within keratan sulfate polymer. Has a preference for sulfating keratan sulfate, but it also transfers sulfate to the unsulfated polymer. Involved in biosynthesis of phosphacan, a major keratan sulfate proteoglycan in the developing brain. Involved in biosynthesis of 6-sulfoGalbeta-containing O-linked glycans in high endothelial venules of lymph nodes. May act in a synergistic manner with CHST4 to generate sialyl 6',6-disulfo Lewis X motif, a recognition determinant for immune cell receptors implicated in leukocyte trafficking. Catalyzes sulfation of N-acetyllactosamine (LacNAc) oligosaccharides with highest efficiency for sialylated LacNAc structures. The chain is Carbohydrate sulfotransferase 1 from Homo sapiens (Human).